An 836-amino-acid chain; its full sequence is Serine/threonine-protein kinase 1 (836 aa).

The segment covering 1–12 (MDHNSPKSRRSR) has biased composition (basic residues). The disordered stretch occupies residues 1 to 244 (MDHNSPKSRR…SLPDSITRED (244 aa)). Residues 28–40 (SDSDSDQGRDRDK) are compositionally biased toward basic and acidic residues. Acidic residues-rich tracts occupy residues 64–75 (DGEGEEDDDDDS), 95–105 (DYDDDDGDESG), and 145–163 (EESS…DDGD). The segment covering 224 to 238 (MQQQNSKMSTTSLPD) has biased composition (polar residues). One can recognise a Protein kinase domain in the interval 249–503 (YEFLNELGKG…AAEMLKHKFV (255 aa)). Residues 255 to 263 (LGKGSYGSV) and K278 each bind ATP. D371 (proton acceptor) is an active-site residue. Disordered regions lie at residues 539–571 (LEDT…APLT), 600–640 (EDET…DSWI), and 760–780 (TSSD…PLPP). The span at 562-571 (PQNSTEAPLT) shows a compositional bias: polar residues. Over residues 606 to 618 (SDSRSQLVREKES) the composition is skewed to basic and acidic residues.

The protein belongs to the protein kinase superfamily. STE Ser/Thr protein kinase family. STE20 subfamily. In terms of assembly, interacts with MOB1A and MOB1B via its N-terminal region at the plasma membrane and in the nucleus. Binds to BIK1 to phosphorylate and stabilize it. Interacts with and phosphorylates RBOHD upon flagellin perception to activate it. The cofactor is Mn(2+). Post-translationally, autophosphorylates. Mostly expressed in mature tissues of roots, shoots, hypocotyls, cotyledons, stems, leaves and flowers, as well as in the shoot apical meristem (SAM).

Its subcellular location is the cell membrane. It localises to the nucleus. The protein resides in the golgi apparatus. It is found in the trans-Golgi network. The protein localises to the early endosome. It catalyses the reaction L-seryl-[protein] + ATP = O-phospho-L-seryl-[protein] + ADP + H(+). The enzyme catalyses L-threonyl-[protein] + ATP = O-phospho-L-threonyl-[protein] + ADP + H(+). Functionally, serine/threonine-protein kinase. Regulates organ size in coordination with MOB1A by modulating cell proliferation and cell expansion, possibly by facilitating cell cycle exit. Positive regulator of the pathogen-associated molecular pattern (PAMP, e.g. flg22)-triggered immunity (PTI) signaling by stabilizing BIK1 and activating RBOHD by phosphorylation to promote the extracellular reactive oxygen species (ROS) burst involved in defense responses to bacterial infection. The polypeptide is Serine/threonine-protein kinase 1 (Arabidopsis thaliana (Mouse-ear cress)).